A 120-amino-acid polypeptide reads, in one-letter code: Adenosylhomocysteinase (120 aa).

N34 is a binding site for NAD(+).

The protein belongs to the adenosylhomocysteinase family. The cofactor is NAD(+).

Its subcellular location is the cytoplasm. It catalyses the reaction S-adenosyl-L-homocysteine + H2O = L-homocysteine + adenosine. The protein operates within amino-acid biosynthesis; L-homocysteine biosynthesis; L-homocysteine from S-adenosyl-L-homocysteine: step 1/1. Functionally, may play a key role in the regulation of the intracellular concentration of adenosylhomocysteine. The protein is Adenosylhomocysteinase (ahcY) of Streptomyces fradiae (Streptomyces roseoflavus).